We begin with the raw amino-acid sequence, 106 residues long: Large ribosomal subunit protein eL42Q (106 aa).

It belongs to the eukaryotic ribosomal protein eL42 family.

This is Large ribosomal subunit protein eL42Q (RIM-C) from Candida maltosa (Yeast).